We begin with the raw amino-acid sequence, 134 residues long: RuBisCO chaperone RbcX (134 aa).

Positions 97 to 134 (SNGNHRRSLLERLTQVDSSSTDQTEPNPGESDTSEDSE) are disordered. The span at 111–122 (QVDSSSTDQTEP) shows a compositional bias: polar residues.

Belongs to the RbcX family. As to quaternary structure, homodimer (RbcX2). Interacts with the exposed C-terminal peptide of RbcL ('Glu-459-Asp-468'); binds 2 RbcL peptides per RbcX2, stapling them into an RbcL2 dimer. A slightly longer peptide binds with a higher affinity, but no long-term stable interaction with RbcL is detected. Contacts a second RbcL monomer via its peripheral polar surface.

The protein localises to the carboxysome. The protein resides in the cytoplasm. Functionally, an RbcL-specific chaperone. Required for assembly of the RbcL8 core, acting downstream of the major chaperonin (GroEL-GroES). Acts on newly folded RbcL, has a transient dynamic interaction with RbcL and is eventually displaced by RbcS. The central cleft of the RbcX homodimer (RbcX2) binds the C-terminus of an RbcL monomer, stabilizing the C-terminus and probably preventing its reassociation with chaperonin GroEL-ES. At the same time the peripheral region of RbcX2 binds a second RbcL monomer, bridging the RbcL homodimers in the correct orientation. The RbcX2(2)-bound RbcL dimers then assemble into the RbcL8 core (RbcL8-(RbcX2)8). RbcS binding triggers the release of RbcX2. Required for optimal reconstitution of RuBisCO into its RbcL8S8 holoenzyme form upon expression of rbcL-rbcS subunits in E.coli, and probably also in situ. A frameshift mutation that replaces half the protein reduces accumulation of both RbcL and RbcS subunits and halves activity of RuBisCO in situ and in E.coli. The protein is RuBisCO chaperone RbcX of Picosynechococcus sp. (strain ATCC 27264 / PCC 7002 / PR-6) (Agmenellum quadruplicatum).